Consider the following 167-residue polypeptide: Respiratory supercomplex factor 1-A, mitochondrial (167 aa).

One can recognise an HIG1 domain in the interval 1 to 86 (MCSDFEEETS…TERKQRREFE (86 aa)). Helical transmembrane passes span 21–38 (EPLI…LYRA) and 53–75 (MFRA…GMYY). The stretch at 75-107 (YKTERKQRREFEKKVEERKAQEKRDAWLRELEA) forms a coiled coil.

It belongs to the RCF1 family. Associates with the respiratory chain complex III/complex IV supercomplex.

It is found in the mitochondrion membrane. In terms of biological role, cytochrome c oxidase subunit which plays a role in assembly of respiratory supercomplexes. The protein is Respiratory supercomplex factor 1-A, mitochondrial (rcf1-A) of Talaromyces marneffei (strain ATCC 18224 / CBS 334.59 / QM 7333) (Penicillium marneffei).